The primary structure comprises 625 residues: TRAF3-interacting protein 1 (625 aa).

The abolishes microtubules binding when missing stretch occupies residues Met-1–Asp-322. The tract at residues Ala-130–Asp-439 is disordered. Polar residues predominate over residues Gln-141–Lys-152. Residues Ser-153–Met-327 show a composition bias toward basic and acidic residues. The DISC1-interaction domain stretch occupies residues Arg-229 to Arg-625. Ser-316 and Ser-409 each carry phosphoserine. Residues Ser-420–Ser-434 show a composition bias toward polar residues. Positions Gly-472–Ala-600 form a coiled coil.

This sequence belongs to the TRAF3IP1 family. As to quaternary structure, interacts with IL13RA1. Binds to microtubules, TRAF3 and DISC1. Component of the IFT complex B, at least composed of IFT20, IFT22, IFT25, IFT27, IFT46, IFT52, TRAF3IP1/IFT54, IFT57, IFT74, IFT80, IFT81, and IFT88. Interacts with IFT88. Interacts with MAP4.

The protein resides in the cytoplasm. It localises to the cytoskeleton. Its subcellular location is the cell projection. It is found in the cilium. The protein localises to the cilium axoneme. The protein resides in the cilium basal body. Functionally, plays an inhibitory role on IL13 signaling by binding to IL13RA1. Involved in suppression of IL13-induced STAT6 phosphorylation, transcriptional activity and DNA-binding. Recruits TRAF3 and DISC1 to the microtubules. Involved in epithelial morphogenesis and in the regulation of microtubule cytoskeleton organization. Is a negative regulator of microtubule stability, acting through the control of MAP4 levels. Involved in ciliogenesis. The polypeptide is TRAF3-interacting protein 1 (Traf3ip1) (Mus musculus (Mouse)).